A 167-amino-acid chain; its full sequence is Peptide deformylase (167 aa).

Positions 91 and 133 each coordinate Fe cation. The active site involves glutamate 134. A Fe cation-binding site is contributed by histidine 137.

This sequence belongs to the polypeptide deformylase family. It depends on Fe(2+) as a cofactor.

The enzyme catalyses N-terminal N-formyl-L-methionyl-[peptide] + H2O = N-terminal L-methionyl-[peptide] + formate. Its function is as follows. Removes the formyl group from the N-terminal Met of newly synthesized proteins. Requires at least a dipeptide for an efficient rate of reaction. N-terminal L-methionine is a prerequisite for activity but the enzyme has broad specificity at other positions. The polypeptide is Peptide deformylase (Baumannia cicadellinicola subsp. Homalodisca coagulata).